Consider the following 94-residue polypeptide: HssA/B-like protein 49 (94 aa).

The interval 1–20 (MTLFSSISSISNPMTSSKSS) is disordered.

Belongs to the hssA/B family.

This Dictyostelium discoideum (Social amoeba) protein is HssA/B-like protein 49 (hssl49).